Consider the following 233-residue polypeptide: uncharacterized protein (233 aa).

The interval 21-43 is disordered; it reads RWRTATSADHPRRGRPAAQAVRR.

This is an uncharacterized protein from Mycobacterium tuberculosis (strain CDC 1551 / Oshkosh).